A 291-amino-acid polypeptide reads, in one-letter code: Phosphate import ATP-binding protein PstB (291 aa).

The region spanning 45-286 is the ABC transporter domain; the sequence is YSTQNLDLWY…PADKQTEDYI (242 aa). 77 to 84 contacts ATP; the sequence is GPSGCGKS.

The protein belongs to the ABC transporter superfamily. Phosphate importer (TC 3.A.1.7) family. As to quaternary structure, the complex is composed of two ATP-binding proteins (PstB), two transmembrane proteins (PstC and PstA) and a solute-binding protein (PstS).

The protein localises to the cell membrane. It catalyses the reaction phosphate(out) + ATP + H2O = ADP + 2 phosphate(in) + H(+). Functionally, part of the ABC transporter complex PstSACB involved in phosphate import. Responsible for energy coupling to the transport system. The sequence is that of Phosphate import ATP-binding protein PstB from Staphylococcus epidermidis (strain ATCC 12228 / FDA PCI 1200).